The primary structure comprises 287 residues: PPP2R1A-PPP2R2A-interacting phosphatase regulator 1 (287 aa).

The tract at residues 1–44 is disordered; sequence MAQEKMELDLELPPGTGGSPAEGGGSGGGGGLRRSNSAPLIHGL. Positions 15 to 32 are enriched in gly residues; it reads GTGGSPAEGGGSGGGGGL. S35 carries the phosphoserine modification. S37 carries the post-translational modification Phosphoserine; by CHEK1. Residue S45 is modified to Phosphoserine. At T47 the chain carries Phosphothreonine. Phosphoserine occurs at positions 48, 62, and 76. K89 is covalently cross-linked (Glycyl lysine isopeptide (Lys-Gly) (interchain with G-Cter in SUMO1)). Phosphoserine is present on residues S143 and S147. Position 149 is a phosphothreonine (T149). Disordered stretches follow at residues 167–189 and 236–287; these read SNGL…RSQS and GVCV…LSSK. Low complexity-rich tracts occupy residues 178–189 and 246–257; these read PTTRFTTRRSQS and GNSSSAGSSCNS. S187 and S189 each carry phosphoserine. Residues 259 to 270 are compositionally biased toward polar residues; sequence AKVSTTTDSPVS. 3 positions are modified to phosphoserine: S267, S270, and S276.

This sequence belongs to the FAM122 family. Interacts with PPP2CA and PPP2R1A. Interacts (via its N-terminus) with PPP2R2A; the interaction is direct and this interaction inhibits PP2A activity. The CHEK1-mediated Ser-37 phosphorylated form interacts with 14-3-3 proteins. CHEK1-mediated phosphorylation at Ser-37 negatively regulates its ability to inhibit serine/threonine-protein phosphatase 2A (PP2A) activity. Phosphorylation leads to its release from the PP2A complex and its sequestration by 14-3-3 proteins in the cytoplasm resulting in its inability to translocate to the nucleus, where it otherwise inhibits PP2A.

It localises to the nucleus. It is found in the cytoplasm. Functionally, acts as an inhibitor of serine/threonine-protein phosphatase 2A (PP2A) activity. Inhibits PP2A activity by blocking the substrate binding site on PPP2R2A and the active site of PPP2CA. Potentiates ubiquitin-mediated proteasomal degradation of serine/threonine-protein phosphatase 2A catalytic subunit alpha (PPP2CA). Inhibits PP2A-mediated dephosphorylation of WEE1, promoting ubiquitin-mediated proteolysis of WEE1, thereby releasing G2/M checkpoint. This Homo sapiens (Human) protein is PPP2R1A-PPP2R2A-interacting phosphatase regulator 1.